The following is a 204-amino-acid chain: FMN-dependent NADH:quinone oxidoreductase (204 aa).

Residues serine 10, 15-17 (SLS), and 139-142 (TSGG) each bind FMN.

It belongs to the azoreductase type 1 family. In terms of assembly, homodimer. The cofactor is FMN.

The catalysed reaction is 2 a quinone + NADH + H(+) = 2 a 1,4-benzosemiquinone + NAD(+). The enzyme catalyses N,N-dimethyl-1,4-phenylenediamine + anthranilate + 2 NAD(+) = 2-(4-dimethylaminophenyl)diazenylbenzoate + 2 NADH + 2 H(+). Its function is as follows. Quinone reductase that provides resistance to thiol-specific stress caused by electrophilic quinones. Functionally, also exhibits azoreductase activity. Catalyzes the reductive cleavage of the azo bond in aromatic azo compounds to the corresponding amines. This chain is FMN-dependent NADH:quinone oxidoreductase, found in Rhizobium leguminosarum bv. trifolii (strain WSM2304).